Reading from the N-terminus, the 364-residue chain is Spermidine/putrescine import ATP-binding protein PotA (364 aa).

Positions 5 to 235 constitute an ABC transporter domain; sequence LSFKGVTKGF…PVNRFVADFI (231 aa). 37-44 serves as a coordination point for ATP; the sequence is GPSGCGKT.

This sequence belongs to the ABC transporter superfamily. Spermidine/putrescine importer (TC 3.A.1.11.1) family. As to quaternary structure, the complex is composed of two ATP-binding proteins (PotA), two transmembrane proteins (PotB and PotC) and a solute-binding protein (PotD).

The protein localises to the cell membrane. It carries out the reaction ATP + H2O + polyamine-[polyamine-binding protein]Side 1 = ADP + phosphate + polyamineSide 2 + [polyamine-binding protein]Side 1.. Part of the ABC transporter complex PotABCD involved in spermidine/putrescine import. Responsible for energy coupling to the transport system. This Staphylococcus haemolyticus (strain JCSC1435) protein is Spermidine/putrescine import ATP-binding protein PotA.